We begin with the raw amino-acid sequence, 126 residues long: Transcription antitermination protein NusB (126 aa).

It belongs to the NusB family.

Its function is as follows. Involved in transcription antitermination. Required for transcription of ribosomal RNA (rRNA) genes. Binds specifically to the boxA antiterminator sequence of the ribosomal RNA (rrn) operons. This is Transcription antitermination protein NusB from Oceanobacillus iheyensis (strain DSM 14371 / CIP 107618 / JCM 11309 / KCTC 3954 / HTE831).